A 36-amino-acid chain; its full sequence is Histone H1-like protein EM5 (36 aa).

Positions 1–36 (MITAAVGALKERGGSSRQAILKYIQANFKVQANPAA) constitute an H15 domain.

The protein belongs to the histone H1/H5 family. Sperm.

Its subcellular location is the nucleus. It localises to the chromosome. This is Histone H1-like protein EM5 from Ensis minor (Razor shell).